Consider the following 292-residue polypeptide: Tubulin beta chain (292 aa).

GTP is bound by residues asparagine 49 and asparagine 71. The tract at residues 265–292 (SEYQQYQDATAEEEGEFDEEEEGDEEAA) is disordered. Acidic residues predominate over residues 274-292 (TAEEEGEFDEEEEGDEEAA).

Belongs to the tubulin family. As to quaternary structure, dimer of alpha and beta chains. A typical microtubule is a hollow water-filled tube with an outer diameter of 25 nm and an inner diameter of 15 nM. Alpha-beta heterodimers associate head-to-tail to form protofilaments running lengthwise along the microtubule wall with the beta-tubulin subunit facing the microtubule plus end conferring a structural polarity. Microtubules usually have 13 protofilaments but different protofilament numbers can be found in some organisms and specialized cells. The cofactor is Mg(2+).

It localises to the cytoplasm. Its subcellular location is the cytoskeleton. In terms of biological role, tubulin is the major constituent of microtubules, a cylinder consisting of laterally associated linear protofilaments composed of alpha- and beta-tubulin heterodimers. Microtubules grow by the addition of GTP-tubulin dimers to the microtubule end, where a stabilizing cap forms. Below the cap, tubulin dimers are in GDP-bound state, owing to GTPase activity of alpha-tubulin. This is Tubulin beta chain from Strongylocentrotus purpuratus (Purple sea urchin).